A 569-amino-acid polypeptide reads, in one-letter code: Acetate/butyrate--CoA ligase AAE7, peroxisomal (569 aa).

The Microbody targeting signal signature appears at 567 to 569 (SRL).

It belongs to the ATP-dependent AMP-binding enzyme family. As to expression, expressed in roots, leaves, stems, flowers and developing seeds.

The protein localises to the peroxisome. It carries out the reaction acetate + ATP + CoA = acetyl-CoA + AMP + diphosphate. The enzyme catalyses a medium-chain fatty acid + ATP + CoA = a medium-chain fatty acyl-CoA + AMP + diphosphate. Peroxisomal acetate/butyrate--CoA ligase that is probably involved in the activation of exogenous acetate for entry into the glyoxylate cycle. May play a role to prevent carbon loss from peroxisomes during lipid mobilization. In vitro, is active with both acetate and butyrate. The polypeptide is Acetate/butyrate--CoA ligase AAE7, peroxisomal (AAE7) (Arabidopsis thaliana (Mouse-ear cress)).